We begin with the raw amino-acid sequence, 251 residues long: Tungstate/molybdate/chromate-binding protein ModA (251 aa).

The signal sequence occupies residues 1 to 23 (MTTRLPQLLLALLASAVSLAASA). Positions 60 and 168 each coordinate molybdate.

Belongs to the bacterial solute-binding protein ModA family. In terms of assembly, the complex is composed of two ATP-binding proteins (ModC), two transmembrane proteins (ModB) and a solute-binding protein (ModA).

Its subcellular location is the periplasm. Part of the ABC transporter complex ModABC involved in the transport of molybdenum into the cell. Binds tungstate and molybdate. Can also bind chromate, with lower affinity. Plays an essential role in recruitment of molybdate for nitrate reduction. The chain is Tungstate/molybdate/chromate-binding protein ModA from Pseudomonas aeruginosa (strain ATCC 15692 / DSM 22644 / CIP 104116 / JCM 14847 / LMG 12228 / 1C / PRS 101 / PAO1).